The sequence spans 110 residues: MKNVISLTDAAAKQVKLLIEKRAKPTFGIRVGIKSGGCAGQTYYVEYADNKNQFDEVVEEKGVRILIDPKTLMYILGSEMDYVETNFKSQFTFTNPNEKANCGCGKSFSV.

This sequence belongs to the HesB/IscA family.

This is an uncharacterized protein from Rickettsia prowazekii (strain Madrid E).